The sequence spans 392 residues: LL-diaminopimelate aminotransferase (392 aa).

Substrate is bound by residues Tyr-15, Gly-40, Lys-104, Tyr-128, and Asn-178. Pyridoxal 5'-phosphate-binding positions include 103–104 (SK), Tyr-128, Asn-178, Tyr-209, and 237–239 (SVS). Lys-240 carries the post-translational modification N6-(pyridoxal phosphate)lysine. Arg-248 is a pyridoxal 5'-phosphate binding site. Residue Arg-366 participates in substrate binding.

It belongs to the class-I pyridoxal-phosphate-dependent aminotransferase family. LL-diaminopimelate aminotransferase subfamily. As to quaternary structure, homodimer. Pyridoxal 5'-phosphate serves as cofactor.

The catalysed reaction is (2S,6S)-2,6-diaminopimelate + 2-oxoglutarate = (S)-2,3,4,5-tetrahydrodipicolinate + L-glutamate + H2O + H(+). It participates in amino-acid biosynthesis; L-lysine biosynthesis via DAP pathway; LL-2,6-diaminopimelate from (S)-tetrahydrodipicolinate (aminotransferase route): step 1/1. Its function is as follows. Involved in the synthesis of meso-diaminopimelate (m-DAP or DL-DAP), required for both lysine and peptidoglycan biosynthesis. Catalyzes the direct conversion of tetrahydrodipicolinate to LL-diaminopimelate. The protein is LL-diaminopimelate aminotransferase of Desulforudis audaxviator (strain MP104C).